Reading from the N-terminus, the 84-residue chain is MKVTCMMIVAVLFLTAWTFVTADDSISALEDLFAKAHDKMENSEASPLNERDCRALGEYCGLPYVHNSRCCSQLCGFICVPESP.

The N-terminal stretch at 1-22 is a signal peptide; it reads MKVTCMMIVAVLFLTAWTFVTA. Positions 23-51 are excised as a propeptide; sequence DDSISALEDLFAKAHDKMENSEASPLNER. Cystine bridges form between cysteine 53–cysteine 71, cysteine 60–cysteine 75, and cysteine 70–cysteine 79.

The protein belongs to the conotoxin O1 superfamily. As to expression, expressed by the venom duct.

The protein localises to the secreted. In terms of biological role, omega-conotoxins act at presynaptic membranes, they bind and block voltage-gated calcium channels (Cav). This chain is Omega-conotoxin-like ArMKLT1-02, found in Conus arenatus (Sand-dusted cone).